The chain runs to 530 residues: Glucocorticoid modulatory element-binding protein 2 (530 aa).

Residues 81-163 enclose the SAND domain; it reads EEGENLEAEI…RKIMDSGELD (83 aa). C110 contacts Zn(2+). DNA-binding residues include K136, K140, K143, and R154. Residue K155 forms a Glycyl lysine isopeptide (Lys-Gly) (interchain with G-Cter in SUMO1); alternate linkage. K155 is covalently cross-linked (Glycyl lysine isopeptide (Lys-Gly) (interchain with G-Cter in SUMO2); alternate). Zn(2+)-binding residues include H167, C171, and C175. Residues 304–348 are a coiled coil; that stretch reads QMDRSREQYARDLAALEQQCDEHRRRAKELKHKSQHLSNVLMTLT. Residue S373 is modified to Phosphoserine.

Homodimer, and heterodimer of GMEB1 and GMEB2. GMEB1 and GMEB2 form the parvovirus initiator complex (PIF). Interacts with the glucocorticoid receptor (NR3C1). May interact with CREB-binding protein (CBP). Expressed in peripheral blood lymphocytes and fetal liver. Expressed preferentially in reproductive and/or developmentally important cells, such as testis, placenta, bone marrow and fetal tissues.

It is found in the nucleus. The protein localises to the cytoplasm. Trans-acting factor that binds to glucocorticoid modulatory elements (GME) present in the TAT (tyrosine aminotransferase) promoter and increases sensitivity to low concentrations of glucocorticoids. Also binds to the transferrin receptor promoter. Essential auxiliary factor for the replication of parvoviruses. The chain is Glucocorticoid modulatory element-binding protein 2 (GMEB2) from Homo sapiens (Human).